The primary structure comprises 185 residues: Elongation factor P (185 aa).

The protein belongs to the elongation factor P family.

It localises to the cytoplasm. It functions in the pathway protein biosynthesis; polypeptide chain elongation. Functionally, involved in peptide bond synthesis. Stimulates efficient translation and peptide-bond synthesis on native or reconstituted 70S ribosomes in vitro. Probably functions indirectly by altering the affinity of the ribosome for aminoacyl-tRNA, thus increasing their reactivity as acceptors for peptidyl transferase. This Deinococcus radiodurans (strain ATCC 13939 / DSM 20539 / JCM 16871 / CCUG 27074 / LMG 4051 / NBRC 15346 / NCIMB 9279 / VKM B-1422 / R1) protein is Elongation factor P.